The chain runs to 89 residues: Probable Fe(2+)-trafficking protein (89 aa).

This sequence belongs to the Fe(2+)-trafficking protein family.

In terms of biological role, could be a mediator in iron transactions between iron acquisition and iron-requiring processes, such as synthesis and/or repair of Fe-S clusters in biosynthetic enzymes. This chain is Probable Fe(2+)-trafficking protein, found in Legionella pneumophila (strain Paris).